A 702-amino-acid polypeptide reads, in one-letter code: 1,4-alpha-glucan-branching enzyme (702 aa).

Ala2 is modified (N-acetylalanine). Residues 62–63 (NE) and 91–93 (WAP) each bind substrate. Trp107 contributes to the (1,4-alpha-D-glucosyl)n binding site. Substrate is bound at residue 118–121 (EYGK). Lys143 contributes to the (1,4-alpha-D-glucosyl)n binding site. Tyr173 bears the Phosphotyrosine mark. 333-336 (EVLR) contacts substrate. The Nucleophile role is filled by Asp357. The active-site Proton donor is Glu412.

Belongs to the glycosyl hydrolase 13 family. GlgB subfamily. Monomer.

It catalyses the reaction Transfers a segment of a (1-&gt;4)-alpha-D-glucan chain to a primary hydroxy group in a similar glucan chain.. It functions in the pathway glycan biosynthesis; glycogen biosynthesis. Its function is as follows. Glycogen-branching enzyme participates in the glycogen biosynthetic process along with glycogenin and glycogen synthase. Generates alpha-1,6-glucosidic branches from alpha-1,4-linked glucose chains, to increase solubility of the glycogen polymer. The chain is 1,4-alpha-glucan-branching enzyme (Gbe1) from Mus musculus (Mouse).